The primary structure comprises 214 residues: uncharacterized protein (214 aa).

An N-terminal signal peptide occupies residues Met-1–Gly-15. Cys-16 carries N-palmitoyl cysteine lipidation. Cys-16 is lipidated: S-diacylglycerol cysteine.

The protein to E.coli YjbF.

The protein localises to the cell membrane. This is an uncharacterized protein from Escherichia coli (strain K12).